We begin with the raw amino-acid sequence, 385 residues long: UPF0284 protein A9601_04941 (385 aa).

It belongs to the UPF0284 family.

The polypeptide is UPF0284 protein A9601_04941 (Prochlorococcus marinus (strain AS9601)).